The sequence spans 206 residues: Small ribosomal subunit protein uS4 (206 aa).

Positions 98-163 (MRLDNVVYRL…SEKFKTFVEN (66 aa)) constitute an S4 RNA-binding domain.

Belongs to the universal ribosomal protein uS4 family. As to quaternary structure, part of the 30S ribosomal subunit. Contacts protein S5. The interaction surface between S4 and S5 is involved in control of translational fidelity.

In terms of biological role, one of the primary rRNA binding proteins, it binds directly to 16S rRNA where it nucleates assembly of the body of the 30S subunit. Its function is as follows. With S5 and S12 plays an important role in translational accuracy. The polypeptide is Small ribosomal subunit protein uS4 (Clostridium botulinum (strain Alaska E43 / Type E3)).